The chain runs to 147 residues: Globin, polymeric component P3 (147 aa).

Residues His-2 to Glu-146 form the Globin domain. Residue His-96 coordinates heme b.

The protein belongs to the globin family. In terms of assembly, polymer.

The chain is Globin, polymeric component P3 from Glycera dibranchiata (Bloodworm).